Reading from the N-terminus, the 603-residue chain is Prosaposin receptor GPR37 (603 aa).

The signal sequence occupies residues 1 to 26; the sequence is MPAPGAPLSRTSRLLLLLLFKVSVSA. The Extracellular segment spans residues 27–255; sequence ALSFVPEPRN…QESYGAYAVM (229 aa). N-linked (GlcNAc...) asparagine glycosylation is present at N36. Residues 39–232 are disordered; the sequence is CLGESCSPLI…GGPRRGNSTN (194 aa). Composition is skewed to basic and acidic residues over residues 51–79, 145–158, and 165–175; these read RSRD…EAEV, TSER…RDEI, and HSVKTEPEPRD. Residues N212 and N229 are each glycosylated (N-linked (GlcNAc...) asparagine). The helical transmembrane segment at 256–276 threads the bilayer; the sequence is CLSVVIFGTGIIGNLAVMCIV. Residues 277 to 289 are Cytoplasmic-facing; it reads CHNYYMRSISNSL. Residues 290-310 form a helical membrane-spanning segment; it reads LANLAFWDFLIIFFCLPLVIF. Residues 311–325 lie on the Extracellular side of the membrane; the sequence is HELTKKWLLEDFSCK. C324 and C409 form a disulfide bridge. A helical membrane pass occupies residues 326–346; the sequence is IVPYIEVASLGVTTFTLCALC. Topologically, residues 347-369 are cytoplasmic; sequence IDRFRAATNVQMYYEMIENCSST. The chain crosses the membrane as a helical span at residues 370–390; it reads TAKLAVIWVGALLLALPEVVL. Residues 391-433 are Extracellular-facing; sequence RQLSKEDLGFSGQAPAERCVIKISPDLPDTIYVLALTYDGARL. The helical transmembrane segment at 434-454 threads the bilayer; that stretch reads WWYFGCYFCLPTLFTITCSLV. The Cytoplasmic portion of the chain corresponds to 455 to 483; the sequence is TARKIRKAEKASTRGNKRQIHLESQMNCT. The helical transmembrane segment at 484–504 threads the bilayer; that stretch reads VVALTILYGFCIIPENICNIV. The Extracellular segment spans residues 505-521; that stretch reads TAYMATGVSQQTMDLLN. Residues 522–542 traverse the membrane as a helical segment; the sequence is IISQFLLFFKSCVTPVLLFCL. The Cytoplasmic segment spans residues 543–603; that stretch reads CRPFSRAFME…STFASVGTHC (61 aa).

The protein belongs to the G-protein coupled receptor 1 family. In terms of assembly, forms a complex with PRKN, STUB1 and HSP70. The amount of STUB1 in the complex increases during ER stress. STUB1 promotes the dissociation of HSP70 from PRKN, thus facilitating PRKN-mediated GPR37 ubiquitination. Interacts with PACRG. In terms of processing, the N-terminus is cleaved by ADAM10 metalloproteinase; mediating limited proteolysis leading to the release of receptor ectodomain by shedding. In addition, cleaved by FURIN between Arg-53 and Asp-54. Ubiquitinated by PRKN in the presence of UBE2E1 and UBE2L3 in the endoplasmic reticulum. The unfolded form is specifically ubiquitinated by SYVN1, which promotes its proteasomal degradation and prevents neuronal cell death. Highly expressed in the brain. High levels of expression were seen in fiber tracts such as the corpus callosum, anterior commissure, fornix, internal capsule, cerebral peduncles, and stria terminalis. Additionally, moderate levels of expression were seen in the pyramidal tracts and cerebellar peduncles, as well as in the spinal tract of the trigeminal nerve and the spinal fasciculi.

It localises to the cell projection. The protein localises to the dendrite. Its subcellular location is the synapse. It is found in the cell membrane. The protein resides in the endoplasmic reticulum membrane. Functionally, G-protein-coupled receptor that plays a role in several physiological pathways such as resolution of inflammatory pain and oligodendrocyte differentiation. Acts as a receptor for several ligands including prosaposin, osteocalcin or neuroprotectin D1. Ligand binding induces endocytosis, followed by an ERK phosphorylation cascade. Acts as a receptor for osteocalcin (OCN) to regulate oligodendrocyte differentiation and central nervous system myelination. Mechanistically, plays a negative role in oligodendrocyte differentiation and myelination during development via activation of the ERK1/2 signaling pathway. Therefore, regulates the stability of myelin or resistance of myelin itself to demyelination. Upon activation by neuroprotectin D1 (NPD1), promotes the activation of phagocytosis in macrophages as well as the shift in cytokine release toward an anti-inflammatory profile, and thus helps to reverse inflammatory pain. In addition, the increased macrophage phagocytosis mediates protection against sepsis upon pathogen infection. Additionally, extracellular vesicles derived from efferocyte express prosaposin, which binds to macrophage GPR37 to increase expression of the efferocytosis receptor TIM4 via an ERK-AP1-dependent signaling axis, leading to increased macrophage efferocytosis efficiency and accelerated resolution of inflammation. May also act as a maturation factor of LRP6, protecting LRP6 from the endoplasmic reticulum (ER)-associated protein degradation (ERAD) and thereby promoting the Wnt/beta-catenin signaling pathway. This is Prosaposin receptor GPR37 (Gpr37) from Rattus norvegicus (Rat).